The sequence spans 505 residues: ATP synthase subunit alpha (505 aa).

172–179 (GDRQIGKT) is a binding site for ATP.

It belongs to the ATPase alpha/beta chains family. In terms of assembly, F-type ATPases have 2 components, CF(1) - the catalytic core - and CF(0) - the membrane proton channel. CF(1) has five subunits: alpha(3), beta(3), gamma(1), delta(1), epsilon(1). CF(0) has three main subunits: a(1), b(2) and c(9-12). The alpha and beta chains form an alternating ring which encloses part of the gamma chain. CF(1) is attached to CF(0) by a central stalk formed by the gamma and epsilon chains, while a peripheral stalk is formed by the delta and b chains.

The protein resides in the cell inner membrane. The catalysed reaction is ATP + H2O + 4 H(+)(in) = ADP + phosphate + 5 H(+)(out). Its function is as follows. Produces ATP from ADP in the presence of a proton gradient across the membrane. The alpha chain is a regulatory subunit. This chain is ATP synthase subunit alpha, found in Syntrophobacter fumaroxidans (strain DSM 10017 / MPOB).